A 379-amino-acid chain; its full sequence is Arginine biosynthesis bifunctional protein ArgJ (379 aa).

Substrate-binding residues include Thr-141, Lys-163, Thr-174, Glu-252, Asn-374, and Thr-379. The active-site Nucleophile is Thr-174.

The protein belongs to the ArgJ family. As to quaternary structure, heterotetramer of two alpha and two beta chains.

The protein resides in the cytoplasm. The catalysed reaction is N(2)-acetyl-L-ornithine + L-glutamate = N-acetyl-L-glutamate + L-ornithine. It catalyses the reaction L-glutamate + acetyl-CoA = N-acetyl-L-glutamate + CoA + H(+). The protein operates within amino-acid biosynthesis; L-arginine biosynthesis; L-ornithine and N-acetyl-L-glutamate from L-glutamate and N(2)-acetyl-L-ornithine (cyclic): step 1/1. Its pathway is amino-acid biosynthesis; L-arginine biosynthesis; N(2)-acetyl-L-ornithine from L-glutamate: step 1/4. Catalyzes two activities which are involved in the cyclic version of arginine biosynthesis: the synthesis of N-acetylglutamate from glutamate and acetyl-CoA as the acetyl donor, and of ornithine by transacetylation between N(2)-acetylornithine and glutamate. This is Arginine biosynthesis bifunctional protein ArgJ from Aquifex aeolicus (strain VF5).